The chain runs to 398 residues: Dihydroorotase (398 aa).

Residues His58 and His60 each coordinate Zn(2+). Residues His60 to Arg62 and Asn92 contribute to the substrate site. Zn(2+) is bound by residues Asp151, His178, and His215. Residue Asn256 participates in substrate binding. A Zn(2+)-binding site is contributed by Asp283. Residue Asp283 is part of the active site. Substrate is bound by residues His287 and Pro297–Gly298.

Belongs to the metallo-dependent hydrolases superfamily. DHOase family. Class I DHOase subfamily. Zn(2+) is required as a cofactor.

It catalyses the reaction (S)-dihydroorotate + H2O = N-carbamoyl-L-aspartate + H(+). Its pathway is pyrimidine metabolism; UMP biosynthesis via de novo pathway; (S)-dihydroorotate from bicarbonate: step 3/3. In terms of biological role, catalyzes the reversible cyclization of carbamoyl aspartate to dihydroorotate. In Clostridium botulinum (strain Eklund 17B / Type B), this protein is Dihydroorotase.